The primary structure comprises 242 residues: MTHSPLAQFDIKKLIDIKMFGFDVSFTNSSIYMLLASILALTYFYLAFYNRKLVPSRLQVSAEIVYNLVADMLNQNIGVKGRKFIPLVFSLFIFILFCNLLGMTPYSFTATSHIIVTFTLAILVFLTVTIVGFVKHGLRFLTLFLPHGTPLWLAPLMIVIELFTYLARPVSLSLRLAANMMAGHVLLKVIAGFTVSLMIYLKFLPIPLMVILIGFEIFVAILQAYIFTILSCMYLNDAINLH.

The next 6 membrane-spanning stretches (helical) occupy residues 29 to 49 (SSIY…LAFY), 84 to 104 (FIPL…LGMT), 114 to 134 (IIVT…VGFV), 140 to 160 (FLTL…MIVI), 189 to 209 (VIAG…IPLM), and 210 to 230 (VILI…FTIL).

The protein belongs to the ATPase A chain family. In terms of assembly, F-type ATPases have 2 components, CF(1) - the catalytic core - and CF(0) - the membrane proton channel. CF(1) has five subunits: alpha(3), beta(3), gamma(1), delta(1), epsilon(1). CF(0) has three main subunits: a(1), b(2) and c(9-12). The alpha and beta chains form an alternating ring which encloses part of the gamma chain. CF(1) is attached to CF(0) by a central stalk formed by the gamma and epsilon chains, while a peripheral stalk is formed by the delta and b chains.

Its subcellular location is the cell inner membrane. Its function is as follows. Key component of the proton channel; it plays a direct role in the translocation of protons across the membrane. The sequence is that of ATP synthase subunit a from Rickettsia felis (strain ATCC VR-1525 / URRWXCal2) (Rickettsia azadi).